The following is a 138-amino-acid chain: Phosphoribosyl-AMP cyclohydrolase (138 aa).

Aspartate 84 is a binding site for Mg(2+). Position 85 (cysteine 85) interacts with Zn(2+). Residues aspartate 86 and aspartate 88 each contribute to the Mg(2+) site. Residues cysteine 102 and cysteine 109 each coordinate Zn(2+).

This sequence belongs to the PRA-CH family. In terms of assembly, homodimer. Mg(2+) serves as cofactor. Zn(2+) is required as a cofactor.

It is found in the cytoplasm. The enzyme catalyses 1-(5-phospho-beta-D-ribosyl)-5'-AMP + H2O = 1-(5-phospho-beta-D-ribosyl)-5-[(5-phospho-beta-D-ribosylamino)methylideneamino]imidazole-4-carboxamide. The protein operates within amino-acid biosynthesis; L-histidine biosynthesis; L-histidine from 5-phospho-alpha-D-ribose 1-diphosphate: step 3/9. Catalyzes the hydrolysis of the adenine ring of phosphoribosyl-AMP. This is Phosphoribosyl-AMP cyclohydrolase from Burkholderia orbicola (strain MC0-3).